The chain runs to 159 residues: MNIKIIGVGKLKEKYLKQGIAEYAKRLGTFCKFQIVEVPDEKAPEKLSPAEMEGVKEKEGERILAKIKDKEYVYALAIEGKERSSEEFAKELEDLGTYGTSDITFVIGGSLGLSPEVLKRANTKISFGRFTLPHQLMRMVLAEQIYRGFMINAGRPYHK.

2 residues coordinate S-adenosyl-L-methionine: Leu76 and Gly108.

This sequence belongs to the RNA methyltransferase RlmH family. As to quaternary structure, homodimer.

It is found in the cytoplasm. It carries out the reaction pseudouridine(1915) in 23S rRNA + S-adenosyl-L-methionine = N(3)-methylpseudouridine(1915) in 23S rRNA + S-adenosyl-L-homocysteine + H(+). Its function is as follows. Specifically methylates the pseudouridine at position 1915 (m3Psi1915) in 23S rRNA. The sequence is that of Ribosomal RNA large subunit methyltransferase H from Ligilactobacillus salivarius (strain UCC118) (Lactobacillus salivarius).